Consider the following 207-residue polypeptide: MSYSGERDQFAPNMALVPMVVEQTSRGERSYDIFSRLLKERIIFLTGQVEDHMANLITAQMLFLEAENPEKDIFLYINSPGGVITAGMSIYDTMQFIKPDVSTICMGQACSMGAFLLTAGAKGKRFCLPNSRVMIHQPLGGFQGQATDIEIHAKEILKVKSRMNELMAYHTGKSLEEIERDTERDRFLSAEQSVEYGLVDSVFTRRD.

Catalysis depends on serine 111, which acts as the Nucleophile. Residue histidine 136 is part of the active site.

It belongs to the peptidase S14 family. In terms of assembly, fourteen ClpP subunits assemble into 2 heptameric rings which stack back to back to give a disk-like structure with a central cavity, resembling the structure of eukaryotic proteasomes.

The protein localises to the cytoplasm. The enzyme catalyses Hydrolysis of proteins to small peptides in the presence of ATP and magnesium. alpha-casein is the usual test substrate. In the absence of ATP, only oligopeptides shorter than five residues are hydrolyzed (such as succinyl-Leu-Tyr-|-NHMec, and Leu-Tyr-Leu-|-Tyr-Trp, in which cleavage of the -Tyr-|-Leu- and -Tyr-|-Trp bonds also occurs).. Its function is as follows. Cleaves peptides in various proteins in a process that requires ATP hydrolysis. Has a chymotrypsin-like activity. Plays a major role in the degradation of misfolded proteins. The chain is ATP-dependent Clp protease proteolytic subunit from Yersinia pseudotuberculosis serotype O:1b (strain IP 31758).